The primary structure comprises 306 residues: Ornithine carbamoyltransferase (306 aa).

Carbamoyl phosphate is bound by residues 53–56 (STRT), Q80, R104, and 131–134 (HPCQ). L-ornithine contacts are provided by residues N162, D219, and 223-224 (SM). Residues 259–260 (CL) and R287 contribute to the carbamoyl phosphate site.

It belongs to the aspartate/ornithine carbamoyltransferase superfamily. OTCase family.

The protein resides in the cytoplasm. The enzyme catalyses carbamoyl phosphate + L-ornithine = L-citrulline + phosphate + H(+). It participates in amino-acid biosynthesis; L-arginine biosynthesis; L-arginine from L-ornithine and carbamoyl phosphate: step 1/3. Its function is as follows. Reversibly catalyzes the transfer of the carbamoyl group from carbamoyl phosphate (CP) to the N(epsilon) atom of ornithine (ORN) to produce L-citrulline. This is Ornithine carbamoyltransferase from Acinetobacter baylyi (strain ATCC 33305 / BD413 / ADP1).